We begin with the raw amino-acid sequence, 123 residues long: Large ribosomal subunit protein bL12 (123 aa).

Belongs to the bacterial ribosomal protein bL12 family. Homodimer. Part of the ribosomal stalk of the 50S ribosomal subunit. Forms a multimeric L10(L12)X complex, where L10 forms an elongated spine to which 2 to 4 L12 dimers bind in a sequential fashion. Binds GTP-bound translation factors.

Functionally, forms part of the ribosomal stalk which helps the ribosome interact with GTP-bound translation factors. Is thus essential for accurate translation. The protein is Large ribosomal subunit protein bL12 of Burkholderia vietnamiensis (strain G4 / LMG 22486) (Burkholderia cepacia (strain R1808)).